Here is a 396-residue protein sequence, read N- to C-terminus: L-lactate dehydrogenase (396 aa).

The FMN hydroxy acid dehydrogenase domain maps to 1-380 (MIISAASDYR…TQDSLVQGLG (380 aa)). A substrate-binding site is contributed by tyrosine 24. Residues serine 106 and glutamine 127 each contribute to the FMN site. Tyrosine 129 contributes to the substrate binding site. Residue threonine 155 participates in FMN binding. Arginine 164 is a binding site for substrate. An FMN-binding site is contributed by lysine 251. The active-site Proton acceptor is histidine 275. Arginine 278 contacts substrate. 306-330 (DSGIRNGLDVVRMIALGADTVLLGR) lines the FMN pocket.

This sequence belongs to the FMN-dependent alpha-hydroxy acid dehydrogenase family. The cofactor is FMN.

It is found in the cell inner membrane. The catalysed reaction is (S)-lactate + A = pyruvate + AH2. Catalyzes the conversion of L-lactate to pyruvate. Is coupled to the respiratory chain. The protein is L-lactate dehydrogenase of Shigella dysenteriae serotype 1 (strain Sd197).